The sequence spans 785 residues: DNA ligase (785 aa).

NAD(+)-binding positions include 32–36 (DAEYD), 81–82 (SL), and Glu-121. The active-site N6-AMP-lysine intermediate is Lys-123. Arg-144, Glu-181, Lys-294, and Lys-318 together coordinate NAD(+). Residues Cys-412, Cys-415, Cys-442, and Cys-448 each contribute to the Zn(2+) site. One can recognise a BRCT domain in the interval 702-785 (VEGLPEAGHT…AFLAKHNIPV (84 aa)).

The protein belongs to the NAD-dependent DNA ligase family. LigA subfamily. The cofactor is Mg(2+). Requires Mn(2+) as cofactor.

It catalyses the reaction NAD(+) + (deoxyribonucleotide)n-3'-hydroxyl + 5'-phospho-(deoxyribonucleotide)m = (deoxyribonucleotide)n+m + AMP + beta-nicotinamide D-nucleotide.. DNA ligase that catalyzes the formation of phosphodiester linkages between 5'-phosphoryl and 3'-hydroxyl groups in double-stranded DNA using NAD as a coenzyme and as the energy source for the reaction. It is essential for DNA replication and repair of damaged DNA. This Pseudomonas fluorescens (strain SBW25) protein is DNA ligase.